Consider the following 353-residue polypeptide: tRNA-splicing endonuclease (353 aa).

Catalysis depends on residues Tyr-289, His-300, and Lys-331.

The protein belongs to the tRNA-intron endonuclease family. Archaeal long subfamily. Homodimer.

The enzyme catalyses pretRNA = a 3'-half-tRNA molecule with a 5'-OH end + a 5'-half-tRNA molecule with a 2',3'-cyclic phosphate end + an intron with a 2',3'-cyclic phosphate and a 5'-hydroxyl terminus.. Functionally, endonuclease that removes tRNA introns. Cleaves pre-tRNA at the 5'- and 3'-splice sites to release the intron. The products are an intron and two tRNA half-molecules bearing 2',3' cyclic phosphate and 5'-OH termini. Recognizes a pseudosymmetric substrate in which 2 bulged loops of 3 bases are separated by a stem of 4 bp. This chain is tRNA-splicing endonuclease, found in Methanosarcina mazei (strain ATCC BAA-159 / DSM 3647 / Goe1 / Go1 / JCM 11833 / OCM 88) (Methanosarcina frisia).